Reading from the N-terminus, the 587-residue chain is Aspartate--tRNA ligase (587 aa).

Glutamate 174 contacts L-aspartate. An aspartate region spans residues 198-201; that stretch reads QITK. Arginine 220 contributes to the L-aspartate binding site. ATP-binding positions include 220–222 and glutamine 229; that span reads RDE. Position 443 (histidine 443) interacts with L-aspartate. Glutamate 477 contacts ATP. Arginine 484 is an L-aspartate binding site. 529–532 provides a ligand contact to ATP; that stretch reads GLDR.

The protein belongs to the class-II aminoacyl-tRNA synthetase family. Type 1 subfamily. As to quaternary structure, homodimer.

It localises to the cytoplasm. The enzyme catalyses tRNA(Asp) + L-aspartate + ATP = L-aspartyl-tRNA(Asp) + AMP + diphosphate. In terms of biological role, catalyzes the attachment of L-aspartate to tRNA(Asp) in a two-step reaction: L-aspartate is first activated by ATP to form Asp-AMP and then transferred to the acceptor end of tRNA(Asp). The polypeptide is Aspartate--tRNA ligase (Streptococcus pneumoniae (strain 70585)).